We begin with the raw amino-acid sequence, 280 residues long: uncharacterized protein (280 aa).

The protein belongs to the metallo-dependent hydrolases superfamily.

This is an uncharacterized protein from Methanocaldococcus jannaschii (strain ATCC 43067 / DSM 2661 / JAL-1 / JCM 10045 / NBRC 100440) (Methanococcus jannaschii).